We begin with the raw amino-acid sequence, 224 residues long: ATP-dependent dethiobiotin synthetase BioD (224 aa).

Residue 14–19 participates in ATP binding; that stretch reads GIGKTV. Threonine 18 provides a ligand contact to Mg(2+). Residue lysine 39 is part of the active site. Serine 43 is a binding site for substrate. Residues aspartate 56, 117-120, and 177-178 contribute to the ATP site; these read EGVG and NE. Positions 56 and 117 each coordinate Mg(2+).

Belongs to the dethiobiotin synthetase family. As to quaternary structure, homodimer. Mg(2+) serves as cofactor.

The protein resides in the cytoplasm. The enzyme catalyses (7R,8S)-7,8-diammoniononanoate + CO2 + ATP = (4R,5S)-dethiobiotin + ADP + phosphate + 3 H(+). The protein operates within cofactor biosynthesis; biotin biosynthesis; biotin from 7,8-diaminononanoate: step 1/2. Its function is as follows. Catalyzes a mechanistically unusual reaction, the ATP-dependent insertion of CO2 between the N7 and N8 nitrogen atoms of 7,8-diaminopelargonic acid (DAPA, also called 7,8-diammoniononanoate) to form a ureido ring. This is ATP-dependent dethiobiotin synthetase BioD from Xanthomonas campestris pv. campestris (strain ATCC 33913 / DSM 3586 / NCPPB 528 / LMG 568 / P 25).